A 494-amino-acid chain; its full sequence is Catalase (494 aa).

Active-site residues include His65 and Asn138. Tyr348 is a heme binding site.

Belongs to the catalase family. In terms of assembly, homotetramer. Heme serves as cofactor.

It is found in the cytoplasm. The protein localises to the cytosol. The protein resides in the peroxisome matrix. It carries out the reaction 2 H2O2 = O2 + 2 H2O. Functionally, catalyzes the degradation of hydrogen peroxide (H(2)O(2)) generated by peroxisomal oxidases to water and oxygen, thereby protecting cells from the toxic effects of hydrogen peroxide. This is Catalase from Pisum sativum (Garden pea).